The following is a 447-amino-acid chain: UPF0328 protein ECU10_1870 (447 aa).

Composition is skewed to basic and acidic residues over residues 1 to 10 (MPSDHPDFRS) and 64 to 84 (HTEG…HTET). 2 disordered regions span residues 1 to 103 (MPSD…TATP) and 147 to 173 (VKSQ…NPRI). The segment covering 92-103 (CPPPHPGPTATP) has biased composition (pro residues).

It belongs to the UPF0328 family.

This is UPF0328 protein ECU10_1870 from Encephalitozoon cuniculi (strain GB-M1) (Microsporidian parasite).